A 173-amino-acid chain; its full sequence is Protein Rv3753c (173 aa).

In Mycobacterium tuberculosis (strain ATCC 25618 / H37Rv), this protein is Protein Rv3753c.